Consider the following 102-residue polypeptide: Putative septation protein SpoVG 1 (102 aa).

It belongs to the SpoVG family.

In terms of biological role, could be involved in septation. The chain is Putative septation protein SpoVG 1 from Listeria monocytogenes serotype 4b (strain F2365).